The following is a 358-amino-acid chain: MFDFSIVTQWVHSLLTSFMPEELAVLIECIVIGVCIMLAYAVIAIIMIFMERKVCAAFQCRLGPMRVGPQGTIQVFADVFKMLIKEIITIRHADKFLYNLAPYIVILASIMAFSCLPINKGMEVLDFNVGIFFLLAASSIGVVGILLAGWSSNNKYSLIGAMRSGAQMISYELSVGLSILTIVILTDTMQLSEIVERQADGWFLFKGHIPALIAFIIYLIAGNAEVNRGPFDLPEAESELTAGYHTEYSGMHFGLFYVAEFVNLFIIAAVATTIFLGGWMPLHIPGLDGFNAIMDYIPGFIWFFGKSFFVVWLLMWIKWTFPRLRIDQILTLEWKYLVPIGLCNLLLMVIIVVFKLHF.

8 helical membrane passes run 30–50, 96–116, 129–149, 165–185, 201–221, 264–284, 297–317, and 336–356; these read IVIG…MIFM, FLYN…FSCL, VGIF…LLAG, GAQM…IVIL, GWFL…YLIA, LFII…PLHI, IPGF…LMWI, and YLVP…VFKL.

This sequence belongs to the complex I subunit 1 family. As to quaternary structure, NDH-1 is composed of 14 different subunits. Subunits NuoA, H, J, K, L, M, N constitute the membrane sector of the complex.

The protein localises to the cell inner membrane. It carries out the reaction a quinone + NADH + 5 H(+)(in) = a quinol + NAD(+) + 4 H(+)(out). NDH-1 shuttles electrons from NADH, via FMN and iron-sulfur (Fe-S) centers, to quinones in the respiratory chain. The immediate electron acceptor for the enzyme in this species is believed to be ubiquinone. Couples the redox reaction to proton translocation (for every two electrons transferred, four hydrogen ions are translocated across the cytoplasmic membrane), and thus conserves the redox energy in a proton gradient. This subunit may bind ubiquinone. This is NADH-quinone oxidoreductase subunit H from Phocaeicola vulgatus (strain ATCC 8482 / DSM 1447 / JCM 5826 / CCUG 4940 / NBRC 14291 / NCTC 11154) (Bacteroides vulgatus).